We begin with the raw amino-acid sequence, 81 residues long: UPF0180 protein BLi01634/BL05144 (81 aa).

This sequence belongs to the UPF0180 family.

The polypeptide is UPF0180 protein BLi01634/BL05144 (Bacillus licheniformis (strain ATCC 14580 / DSM 13 / JCM 2505 / CCUG 7422 / NBRC 12200 / NCIMB 9375 / NCTC 10341 / NRRL NRS-1264 / Gibson 46)).